Here is a 238-residue protein sequence, read N- to C-terminus: Ribonuclease PH (238 aa).

Phosphate contacts are provided by residues Arg-86 and Gly-124–Arg-126.

This sequence belongs to the RNase PH family. In terms of assembly, homohexameric ring arranged as a trimer of dimers.

The enzyme catalyses tRNA(n+1) + phosphate = tRNA(n) + a ribonucleoside 5'-diphosphate. Its function is as follows. Phosphorolytic 3'-5' exoribonuclease that plays an important role in tRNA 3'-end maturation. Removes nucleotide residues following the 3'-CCA terminus of tRNAs; can also add nucleotides to the ends of RNA molecules by using nucleoside diphosphates as substrates, but this may not be physiologically important. Probably plays a role in initiation of 16S rRNA degradation (leading to ribosome degradation) during starvation. The protein is Ribonuclease PH of Klebsiella pneumoniae (strain 342).